The sequence spans 444 residues: N-succinylarginine dihydrolase (444 aa).

Substrate contacts are provided by residues 19–28 (AGLSFGNVAS), Asn-110, and 137–138 (HR). The active site involves Glu-174. Arg-214 lines the substrate pocket. His-250 is a catalytic residue. Positions 252 and 362 each coordinate substrate. Catalysis depends on Cys-368, which acts as the Nucleophile.

This sequence belongs to the succinylarginine dihydrolase family. As to quaternary structure, homodimer.

It catalyses the reaction N(2)-succinyl-L-arginine + 2 H2O + 2 H(+) = N(2)-succinyl-L-ornithine + 2 NH4(+) + CO2. Its pathway is amino-acid degradation; L-arginine degradation via AST pathway; L-glutamate and succinate from L-arginine: step 2/5. Catalyzes the hydrolysis of N(2)-succinylarginine into N(2)-succinylornithine, ammonia and CO(2). In Shewanella baltica (strain OS155 / ATCC BAA-1091), this protein is N-succinylarginine dihydrolase.